A 462-amino-acid polypeptide reads, in one-letter code: Metal cation symporter ZIP8 (462 aa).

The first 19 residues, 1 to 19 (MAPGRAVAGLLLLAATSLG), serve as a signal peptide directing secretion. Residues 20–132 (HPSEGPELAF…PSLSEVWGYG (113 aa)) lie on the Extracellular side of the membrane. N40, N88, and N96 each carry an N-linked (GlcNAc...) asparagine glycan. A helical transmembrane segment spans residues 133–153 (FLSVTIINLASLLGLILTPLI). Topologically, residues 154 to 160 (KKSYFPK) are cytoplasmic. The chain crosses the membrane as a helical span at residues 161–181 (ILTYFVGLAIGTLFSNAIFQL). Residues 182 to 191 (IPEAFGFNPK) are Extracellular-facing. The chain crosses the membrane as a helical span at residues 192-212 (IDNYVEKAVAVFGGFYMLFFV). The Cytoplasmic portion of the chain corresponds to 213-367 (ERTLKMLLKT…LNAGMSTRQA (155 aa)). The short motif at 345-350 (EEFPHE) is the XEXPHE-motif element. The helical transmembrane segment at 368 to 388 (LLFNFLSACSCYVGLAFGILV) threads the bilayer. At 389-390 (GN) the chain is on the extracellular side. A helical transmembrane segment spans residues 391–411 (NFAPNIIFALAGGMFLYISLA). Topologically, residues 412 to 431 (DMFPEMNDMLREKVTGRQTD) are cytoplasmic. Residues 432–452 (FTFFMIQNAGMLTGFTAILLI) traverse the membrane as a helical segment. The Extracellular segment spans residues 453–462 (TLYAGDIELQ).

Belongs to the ZIP transporter (TC 2.A.5) family. As to quaternary structure, homodimer. Post-translationally, N-glycosylated. N-glycosylation is not required for proper iron and zinc transport. In terms of tissue distribution, ubiquitously expressed.

The protein localises to the cell membrane. The protein resides in the apical cell membrane. It is found in the basolateral cell membrane. It localises to the lysosome membrane. The catalysed reaction is Zn(2+)(out) + 2 hydrogencarbonate(out) = Zn(2+)(in) + 2 hydrogencarbonate(in). It catalyses the reaction selenite(out) + Zn(2+)(out) + hydrogencarbonate(out) = selenite(in) + Zn(2+)(in) + hydrogencarbonate(in). It carries out the reaction Mn(2+)(out) + 2 hydrogencarbonate(out) = Mn(2+)(in) + 2 hydrogencarbonate(in). The enzyme catalyses Cd(2+)(out) + 2 hydrogencarbonate(out) = Cd(2+)(in) + 2 hydrogencarbonate(in). The catalysed reaction is Fe(2+)(out) + 2 hydrogencarbonate(out) = Fe(2+)(in) + 2 hydrogencarbonate(in). It catalyses the reaction Co(2+)(out) + 2 hydrogencarbonate(out) = Co(2+)(in) + 2 hydrogencarbonate(in). Functionally, electroneutral divalent metal cation:bicarbonate symporter of the plasma membrane mediating the cellular uptake of zinc and manganese, two divalent metal cations important for development, tissue homeostasis and immunity. Transports an electroneutral complex composed of a divalent metal cation and two bicarbonate anions or alternatively a bicarbonate and a selenite anion. Thereby, it also contributes to the cellular uptake of selenium, an essential trace metal and micronutrient. Also imports cadmium a non-essential metal which is cytotoxic and carcinogenic. May also transport iron and cobalt through membranes. Through zinc import, indirectly regulates the metal-dependent transcription factor MTF1 and the expression of some metalloproteases involved in cartilage catabolism and also probably heart development. Also indirectly regulates the expression of proteins involved in cell morphology and cytoskeleton organization. Indirectly controls innate immune function and inflammatory response by regulating zinc cellular uptake which in turn modulates the expression of genes specific of these processes. Protects, for instance, cells from injury and death at the onset of inflammation. By regulating zinc influx into monocytes also directly modulates their adhesion to endothelial cells and arteries. Reclaims manganese from the bile at the apical membrane of hepatocytes, thereby regulating the activity of the manganese-dependent enzymes through the systemic levels of the nutrient. Also participates in manganese reabsorption in the proximal tubule of the kidney. By mediating the extracellular uptake of manganese by cells of the blood-brain barrier, may also play a role in the transport of the micronutrient to the brain. With manganese cellular uptake also participates in mitochondrial proper function. Finally, also probably functions intracellularly, translocating zinc from lysosome to cytosol to indirectly enhance the expression of specific genes during TCR-mediated T cell activation. The polypeptide is Metal cation symporter ZIP8 (Mus musculus (Mouse)).